A 470-amino-acid polypeptide reads, in one-letter code: tRNA modification GTPase MnmE (470 aa).

3 residues coordinate (6S)-5-formyl-5,6,7,8-tetrahydrofolate: Arg-30, Glu-92, and Arg-132. In terms of domain architecture, TrmE-type G spans 227 to 393 (GLQVALVGRP…LIKAVLKTCG (167 aa)). Position 237 (Asn-237) interacts with K(+). Residues 237–242 (NVGKSS), 256–262 (TDLPGTT), 281–284 (DTAG), and 342–345 (NKAD) each bind GTP. Residue Ser-241 coordinates Mg(2+). 3 residues coordinate K(+): Thr-256, Leu-258, and Thr-261. Thr-262 contributes to the Mg(2+) binding site. Lys-470 provides a ligand contact to (6S)-5-formyl-5,6,7,8-tetrahydrofolate.

The protein belongs to the TRAFAC class TrmE-Era-EngA-EngB-Septin-like GTPase superfamily. TrmE GTPase family. As to quaternary structure, homodimer. Heterotetramer of two MnmE and two MnmG subunits. K(+) serves as cofactor.

It localises to the cytoplasm. Its function is as follows. Exhibits a very high intrinsic GTPase hydrolysis rate. Involved in the addition of a carboxymethylaminomethyl (cmnm) group at the wobble position (U34) of certain tRNAs, forming tRNA-cmnm(5)s(2)U34. The protein is tRNA modification GTPase MnmE of Prochlorococcus marinus (strain MIT 9313).